The sequence spans 358 residues: Putative zinc metalloprotease RC0203 (358 aa).

Zn(2+) is bound at residue His-18. Residue Glu-19 is part of the active site. His-22 contacts Zn(2+). 4 consecutive transmembrane segments (helical) span residues 52–71 (GVRWKICLIPLGGYVKIYGY), 97–119 (FLIVAAGPLINYLLAIIIFAGFY), 285–307 (YLLFIAMLSVNLGLLNLLPIPVL), and 332–351 (ILLQLGAIIIIFLIIIAVSN). In terms of domain architecture, PDZ spans 102–186 (AGPLINYLLA…STLTIERKSE (85 aa)).

It belongs to the peptidase M50B family. The cofactor is Zn(2+).

Its subcellular location is the cell inner membrane. This is Putative zinc metalloprotease RC0203 from Rickettsia conorii (strain ATCC VR-613 / Malish 7).